The following is a 181-amino-acid chain: Ribulose bisphosphate carboxylase small subunit, chloroplastic 6 (181 aa).

The N-terminal 57 residues, 1 to 57 (MASSIVSSAAVATRSNVAQASMVAPFTGLKSAASFPVTKKNNNVDITSLASNGGRVR), are a transit peptide targeting the chloroplast.

The protein belongs to the RuBisCO small chain family. In terms of assembly, heterohexadecamer of 8 large and 8 small subunits.

It is found in the plastid. Its subcellular location is the chloroplast. In terms of biological role, ruBisCO catalyzes two reactions: the carboxylation of D-ribulose 1,5-bisphosphate, the primary event in carbon dioxide fixation, as well as the oxidative fragmentation of the pentose substrate. Both reactions occur simultaneously and in competition at the same active site. Although the small subunit is not catalytic it is essential for maximal activity. The polypeptide is Ribulose bisphosphate carboxylase small subunit, chloroplastic 6 (Solanum tuberosum (Potato)).